Consider the following 409-residue polypeptide: Casein kinase I isoform delta-B (409 aa).

The Protein kinase domain occupies Tyr-9–Phe-277. ATP is bound by residues Ile-15 to Ile-23 and Lys-38. The active-site Proton acceptor is Asp-128. A compositionally biased stretch (basic and acidic residues) spans Thr-300 to Met-315. The tract at residues Thr-300–Lys-409 is disordered. The tract at residues His-317–Pro-341 is autoinhibitory. Polar residues-rich tracts occupy residues Thr-346–Arg-358 and Asn-380–Ile-402.

Belongs to the protein kinase superfamily. Monomer. Interacts with per1 and per2. Component of the circadian core oscillator. In terms of processing, autophosphorylated on serine and threonine residues.

The protein localises to the cytoplasm. The protein resides in the nucleus. It carries out the reaction L-seryl-[protein] + ATP = O-phospho-L-seryl-[protein] + ADP + H(+). It catalyses the reaction L-threonyl-[protein] + ATP = O-phospho-L-threonyl-[protein] + ADP + H(+). Its activity is regulated as follows. Exhibits substrate-dependent heparin activation. Casein kinases are operationally defined by their preferential utilization of acidic proteins such as caseins as substrates. Central component of the circadian clock. May act as a negative regulator of circadian rhythmicity by phosphorylating per1 and per2, which may lead to their degradation. Participates in wnt signaling. The sequence is that of Casein kinase I isoform delta-B (csnk1db) from Danio rerio (Zebrafish).